A 265-amino-acid polypeptide reads, in one-letter code: Type 1 encapsulin shell protein (265 aa).

It belongs to the encapsulin family. Family 1 subfamily. In terms of assembly, found in a complex with DyP, suggesting it is the native cargo protein. Monomers form pentamers, which assemble to form hollow shells composed of 60 subunits with several openings.

It is found in the encapsulin nanocompartment. The protein resides in the cell membrane. Shell component of a type 1 encapsulin nanocompartment. Assembles into proteinaceous shells 23-24 nm in diameter with 2-2.5 nm thick walls. Cargo protein DyP is targeted to the interior via its C-terminal extension; probably only 1 DyP hexamer is incorporated into each shell. Probably involved in protection against oxidative damage. The protein is Type 1 encapsulin shell protein of Mycolicibacterium paratuberculosis (strain ATCC BAA-968 / K-10) (Mycobacterium paratuberculosis).